Here is a 368-residue protein sequence, read N- to C-terminus: 3-isopropylmalate dehydrogenase (368 aa).

77–88 (GPKWGTGAVRPE) contacts NAD(+). Arg95, Arg105, Arg134, and Asp226 together coordinate substrate. Residues Asp226, Asp251, and Asp255 each contribute to the Mg(2+) site. An NAD(+)-binding site is contributed by 290–301 (GSAPDLPANKVN).

It belongs to the isocitrate and isopropylmalate dehydrogenases family. As to quaternary structure, homodimer. Mg(2+) serves as cofactor. Mn(2+) is required as a cofactor.

It is found in the cytoplasm. It catalyses the reaction (2R,3S)-3-isopropylmalate + NAD(+) = 4-methyl-2-oxopentanoate + CO2 + NADH. The protein operates within amino-acid biosynthesis; L-leucine biosynthesis; L-leucine from 3-methyl-2-oxobutanoate: step 3/4. Its function is as follows. Catalyzes the oxidation of 3-carboxy-2-hydroxy-4-methylpentanoate (3-isopropylmalate) to 3-carboxy-4-methyl-2-oxopentanoate. The product decarboxylates to 4-methyl-2 oxopentanoate. In Kodamaea ohmeri (Yeast), this protein is 3-isopropylmalate dehydrogenase (LEU2).